The primary structure comprises 1098 residues: Beta-alanine-activating enzyme (1098 aa).

ATP-binding positions include 198–206 (TSGTTGIPK), Asp428, Arg442, and Lys527. Positions 553-630 (EDLWEKLQYL…EIYNHILQTV (78 aa)) constitute a Carrier domain. O-(pantetheine 4'-phosphoryl)serine is present on Ser589. Phosphoserine is present on residues Ser649 and Ser724.

The protein belongs to the ATP-dependent AMP-binding enzyme family. In terms of tissue distribution, ubiquitously expressed in adult tissues.

Covalently binds beta-alanine in an ATP-dependent manner to form a thioester bond with its phosphopantetheine group and transfers it to an, as yet, unknown acceptor. May be required for a post-translational protein modification or for post-transcriptional modification of an RNA. This Homo sapiens (Human) protein is Beta-alanine-activating enzyme (AASDH).